Reading from the N-terminus, the 564-residue chain is Septin-9 (564 aa).

An N-acetylmethionine modification is found at Met-1. The residue at position 12 (Ser-12) is a Phosphoserine. Phosphothreonine is present on residues Thr-24 and Thr-31. Disordered regions lie at residues 38 to 165 (VASS…PVTD) and 178 to 224 (PAEA…DSEV). An N6-acetyllysine modification is found at Lys-44. Phosphoserine occurs at positions 64, 67, and 71. The segment covering 95-109 (DISSKQVESTASTPG) has biased composition (polar residues). Over residues 116–134 (KRAEVLGHKTPEPVPRRTE) the composition is skewed to basic and acidic residues. Thr-125 carries the phosphothreonine modification. Over residues 190-203 (TLENSEAPMSQLQS) the composition is skewed to polar residues. At Tyr-258 the chain carries Phosphotyrosine. In terms of domain architecture, Septin-type G spans 275-546 (QGFEFNIMVV…EAYRVKRLNE (272 aa)). Residues 285-292 (GQSGLGKS) are G1 motif. 285-292 (GQSGLGKS) is a binding site for GTP. Residues Ser-307 and Ser-312 each carry the phosphoserine modification. GTP-binding positions include Thr-319, Gly-345, 425 to 433 (KADTLTLEE), Gly-480, and Arg-495. The interval 342–345 (DTPG) is G3 motif. A G4 motif region spans residues 424 to 427 (AKAD).

Belongs to the TRAFAC class TrmE-Era-EngA-EngB-Septin-like GTPase superfamily. Septin GTPase family. As to quaternary structure, septins polymerize into heterooligomeric protein complexes that form filaments, and associate with cellular membranes, actin filaments, and microtubules. GTPase activity is required for filament formation. Interacts with SEPTIN2, SEPTIN6, SEPTIN7, SEPTIN11 and SEPTIN14. Interacts with RTKN and ARHGEF18. Expressed in the brain, mainly in the perikarya and processes of astrocytes in the cerebellum, dentate gyrus and corpus callosum (at protein level). In the sciatic nerve, highly expressed in Schwann cells (at protein level). Isoforms are differentially expressed in testes, kidney, liver, heart, spleen and brain. Undetectable in skeletal muscle.

The protein resides in the cytoplasm. It is found in the cytoskeleton. Its function is as follows. Filament-forming cytoskeletal GTPase. May play a role in cytokinesis (Potential). The sequence is that of Septin-9 from Rattus norvegicus (Rat).